A 487-amino-acid chain; its full sequence is Cell wall protein TIR4 (487 aa).

Positions 1-22 (MAYSKITLLAALAAIAYAQTQA) are cleaved as a signal peptide. A run of 11 repeats spans residues 137–148 (SSSVAPSSSEVV), 149–160 (SSSVAPSSSEVV), 161–172 (SSSVAPSSSEVV), 173–184 (SSSVASSSSEVA), 185–196 (SSSVAPSSSEVV), 197–208 (SSSVASSSSEVA), 209–220 (SSSVAPSSSEVV), 221–232 (SSSVAPSSSEVV), 233–244 (SSSVASSSSEVA), 245–256 (SSSVAPSSSEVV), and 257–268 (SSSVASSTSEAT). Residues 137 to 268 (SSSVAPSSSE…SVASSTSEAT (132 aa)) form an 11 X 12 AA approximate tandem repeats, Ser-rich region. The tract at residues 206-299 (EVASSSVAPS…SVSSSSAVSS (94 aa)) is disordered. 5 N-linked (GlcNAc...) asparagine glycosylation sites follow: N327, N348, N368, N403, and N404. Residue N465 is the site of GPI-anchor amidated asparagine attachment. A propeptide spans 466–487 (GAAKAVIGMGAGALAAVAAMLL) (removed in mature form).

Belongs to the SRP1/TIP1 family. Post-translationally, the GPI-anchor is attached to the protein in the endoplasmic reticulum and serves to target the protein to the cell surface. There, the glucosamine-inositol phospholipid moiety is cleaved off and the GPI-modified mannoprotein is covalently attached via its lipidless GPI glycan remnant to the 1,6-beta-glucan of the outer cell wall layer.

It is found in the secreted. It localises to the cell wall. Its subcellular location is the membrane. Component of the cell wall. Required for anaerobic growth. The protein is Cell wall protein TIR4 (TIR4) of Saccharomyces cerevisiae (strain ATCC 204508 / S288c) (Baker's yeast).